Consider the following 206-residue polypeptide: Large ribosomal subunit protein uL4 (206 aa).

The tract at residues 46–78 (GNRAQKDREQVKHTTKKPWRQKGTGRARAGMSS) is disordered. Residues 58–70 (HTTKKPWRQKGTG) show a composition bias toward basic residues.

This sequence belongs to the universal ribosomal protein uL4 family. In terms of assembly, part of the 50S ribosomal subunit.

One of the primary rRNA binding proteins, this protein initially binds near the 5'-end of the 23S rRNA. It is important during the early stages of 50S assembly. It makes multiple contacts with different domains of the 23S rRNA in the assembled 50S subunit and ribosome. In terms of biological role, forms part of the polypeptide exit tunnel. The chain is Large ribosomal subunit protein uL4 from Burkholderia lata (strain ATCC 17760 / DSM 23089 / LMG 22485 / NCIMB 9086 / R18194 / 383).